Here is a 202-residue protein sequence, read N- to C-terminus: uncharacterized protein (202 aa).

Residues 10–30 (TAAIFLLCCTSVIILFTIAVV) form a helical membrane-spanning segment.

This sequence belongs to the bacterial sugar transferase family.

The protein localises to the cell membrane. Its function is as follows. May be involved in the production of the exopolysaccharide (EPS) component of the extracellular matrix during biofilm formation. EPS is responsible for the adhesion of chains of cells into bundles. This is an uncharacterized protein from Bacillus subtilis (strain 168).